Reading from the N-terminus, the 512-residue chain is Cytoplasmic tRNA 2-thiolation protein 2-B (512 aa).

Residues valine 196 to arginine 215 are disordered. Residues serine 199–serine 214 show a composition bias toward polar residues.

Belongs to the CTU2/NCS2 family.

Its subcellular location is the cytoplasm. The protein operates within tRNA modification; 5-methoxycarbonylmethyl-2-thiouridine-tRNA biosynthesis. Its function is as follows. Plays a central role in 2-thiolation of mcm(5)S(2)U at tRNA wobble positions of tRNA(Lys), tRNA(Glu) and tRNA(Gln). May act by forming a heterodimer with ctu1/atpbd3 that ligates sulfur from thiocarboxylated urm1 onto the uridine of tRNAs at wobble position. The polypeptide is Cytoplasmic tRNA 2-thiolation protein 2-B (ctu2-b) (Xenopus laevis (African clawed frog)).